A 302-amino-acid polypeptide reads, in one-letter code: Heat stress transcription factor B-1 (302 aa).

A compositionally biased stretch (low complexity) spans 1–15 (MAAAEAAAAVGKQQQ). Disordered regions lie at residues 1 to 33 (MAAA…PFLT) and 116 to 184 (GIRR…RKDN). A compositionally biased stretch (gly residues) spans 16–28 (KGGGGRGGGGGGP). A compositionally biased stretch (polar residues) spans 123 to 133 (TTPQSSKSCGS). Positions 139–150 (FPPPLPPLPPEP) are enriched in pro residues. Residues 151–172 (SATTSSGNDRSSSSASSPPRAD) show a composition bias toward low complexity. The stretch at 170 to 202 (RADITSENEQLRKDNQTLTMELARARRHCEELL) forms a coiled coil. Residues 180–209 (LRKDNQTLTMELARARRHCEELLGFLSRFL) are hydrophobic repeat HR-A/B. The Nuclear export signal motif lies at 211 to 218 (VRQLDLRL). Positions 263 to 267 (RKRAR) match the Nuclear localization signal motif.

Belongs to the HSF family. Class B subfamily. Homotrimer. Exhibits temperature-dependent phosphorylation.

It is found in the cytoplasm. It localises to the nucleus. Transcriptional regulator that specifically binds DNA of heat shock promoter elements (HSE). The chain is Heat stress transcription factor B-1 (HSFB1) from Oryza sativa subsp. japonica (Rice).